The sequence spans 341 residues: Processive diacylglycerol beta-glycosyltransferase (341 aa).

It belongs to the glycosyltransferase 2 family. It depends on Mg(2+) as a cofactor.

Its subcellular location is the cell membrane. It catalyses the reaction a 1,2-diacyl-sn-glycerol + UDP-alpha-D-glucose = a 1,2-diacyl-3-O-(beta-D-glucopyranosyl)-sn-glycerol + UDP + H(+). The enzyme catalyses a 1,2-diacyl-sn-glycerol + UDP-alpha-D-galactose = a 1,2-diacyl-3-O-(beta-D-galactosyl)-sn-glycerol + UDP + H(+). It carries out the reaction a 1,2-diacyl-3-O-(beta-D-glucopyranosyl)-sn-glycerol + UDP-alpha-D-glucose = a 1,2-diacyl-3-O-(beta-D-Glc-(1-&gt;6)-beta-D-Glc)-sn-glycerol + UDP + H(+). The catalysed reaction is a 1,2-diacyl-3-O-(beta-D-galactosyl)-sn-glycerol + UDP-alpha-D-galactose = a 1,2-diacyl-3-O-[beta-D-galactosyl-(1-&gt;6)-beta-D-galactosyl]-sn-glycerol + UDP + H(+). The protein operates within glycolipid metabolism; diglucosyl-diacylglycerol biosynthesis. Activated by the negatively charged lipid dioleoylphosphatidylglycerol (DOPG) and inhibited by N-(n-nonyl)deoxygalactonojirimycin (C9J). In terms of biological role, processive glycosyltransferase involved in the biosynthesis of both the non-bilayer-prone beta-monoglycosyldiacylglycerol and the bilayer-forming membrane lipid beta-diglycosyldiacylglycerol. These components contribute to regulate the properties and stability of the membrane. Catalyzes sequentially the transfers of glucosyl or galactosyl residues from UDP-Glc or UDP-Gal to diacylglycerol (DAG) acceptor to form the corresponding beta-glycosyl-DAG (3-O-(beta-D-glycopyranosyl)-1,2-diacyl-sn-glycerol), which then acts as acceptor to give beta-diglycosyl-DAG product (3-O-(beta-D-glycopyranosyl-beta-(1-&gt;6)-D-glycopyranosyl)-1,2-diacyl-sn-glycerol). Dioleoylglycerol (DOG) is a preferred sugar acceptor than 3-O-(beta-D-glucopyranosyl)-1,2-dioleoyl-sn-glycerol. This is Processive diacylglycerol beta-glycosyltransferase from Mycoplasma genitalium (strain ATCC 33530 / DSM 19775 / NCTC 10195 / G37) (Mycoplasmoides genitalium).